Reading from the N-terminus, the 367-residue chain is MLAKPTIKRRESTKIYVGNVPIGGDAPIAVQSMTNTRTTDVEATVAQIKALERVGADIVRVSVPTMDAAEAFKLIKQQVNVPLVADIHFDYRIALKVAEYGVDCLRINPGNIGREDRIRAVVDCARDNNIPIRIGVNAGSLEKDLQEKYGEPTPEALLESALRHVEILDRLNFDQFKVSVKASDVFLAVESYRLLAKAIKQPLHLGITEAGGFRAGAVKSAVGLGMLLAEGIGDTLRISLAADPVEEIKVGFDILKSLRIRSRGINFIACPTCSRQEFDVIGTVNALEQRLEDIITPMDVSIIGCVVNGPGEALVSDLGVTGGNKKSGYYLDGERQKERFDNDDLINQLEAKIRAKVAAQDPKNRII.

Residues Cys270, Cys273, Cys305, and Glu312 each coordinate [4Fe-4S] cluster.

The protein belongs to the IspG family. It depends on [4Fe-4S] cluster as a cofactor.

The catalysed reaction is (2E)-4-hydroxy-3-methylbut-2-enyl diphosphate + oxidized [flavodoxin] + H2O + 2 H(+) = 2-C-methyl-D-erythritol 2,4-cyclic diphosphate + reduced [flavodoxin]. It functions in the pathway isoprenoid biosynthesis; isopentenyl diphosphate biosynthesis via DXP pathway; isopentenyl diphosphate from 1-deoxy-D-xylulose 5-phosphate: step 5/6. In terms of biological role, converts 2C-methyl-D-erythritol 2,4-cyclodiphosphate (ME-2,4cPP) into 1-hydroxy-2-methyl-2-(E)-butenyl 4-diphosphate. The chain is 4-hydroxy-3-methylbut-2-en-1-yl diphosphate synthase (flavodoxin) from Pasteurella multocida (strain Pm70).